We begin with the raw amino-acid sequence, 333 residues long: T-cell surface glycoprotein CD1b (333 aa).

The signal sequence occupies residues 1 to 17 (MLLLPFQLLAVLFPGGN). Residues 18–303 (SEHAFQGPTS…YWRNPTSIGS (286 aa)) lie on the Extracellular side of the membrane. N-linked (GlcNAc...) asparagine glycosylation is found at Asn-38, Asn-75, and Asn-146. 3 disulfide bridges follow: Cys-120–Cys-184, Cys-149–Cys-163, and Cys-224–Cys-279. An Ig-like domain is found at 185–295 (PRYLLGVLNA…LEGQDIILYW (111 aa)). The N-linked (GlcNAc...) asparagine glycan is linked to Asn-258. Residues 304–324 (IVLAIIVPSLLLLLCLALWYM) traverse the membrane as a helical segment. Over 325–333 (RRRSYQNIP) the chain is Cytoplasmic. The short motif at 329 to 332 (YQNI) is the Internalization signal element.

In terms of assembly, heterodimer with B2M (beta-2-microglobulin). Interacts with saposin C. In terms of tissue distribution, expressed on cortical thymocytes, on certain T-cell leukemias, and in various other tissues.

It localises to the cell membrane. It is found in the endosome membrane. The protein resides in the lysosome membrane. In terms of biological role, antigen-presenting protein that binds self and non-self lipid and glycolipid antigens and presents them to T-cell receptors on natural killer T-cells. This Homo sapiens (Human) protein is T-cell surface glycoprotein CD1b (CD1B).